We begin with the raw amino-acid sequence, 388 residues long: Pepsin A-3 (388 aa).

A signal peptide spans 1–15; the sequence is MKWLLLLGLVALSEC. Positions 16–62 are cleaved as a propeptide — activation peptide; the sequence is IMYKVPLIRKKSLRRTLSERGLLKDFLKKHNLNPARKYFPQWKAPTL. One can recognise a Peptidase A1 domain in the interval 76–385; that stretch reads YFGTIGIGTP…DRANNQVGLA (310 aa). Aspartate 94 is a catalytic residue. 2 disulfide bridges follow: cysteine 107/cysteine 112 and cysteine 268/cysteine 272. Residue aspartate 277 is part of the active site. A disulfide bridge connects residues cysteine 311 and cysteine 344.

This sequence belongs to the peptidase A1 family.

The protein localises to the secreted. The enzyme catalyses Preferential cleavage: hydrophobic, preferably aromatic, residues in P1 and P1' positions. Cleaves 1-Phe-|-Val-2, 4-Gln-|-His-5, 13-Glu-|-Ala-14, 14-Ala-|-Leu-15, 15-Leu-|-Tyr-16, 16-Tyr-|-Leu-17, 23-Gly-|-Phe-24, 24-Phe-|-Phe-25 and 25-Phe-|-Tyr-26 bonds in the B chain of insulin.. Shows particularly broad specificity; although bonds involving phenylalanine and leucine are preferred, many others are also cleaved to some extent. This is Pepsin A-3 (PGA3) from Homo sapiens (Human).